Reading from the N-terminus, the 114-residue chain is uncharacterized protein (114 aa).

3 residues coordinate Fe cation: Cys40, Cys106, and Cys108.

Belongs to the HesB/IscA family. Ycf83 subfamily.

The protein localises to the plastid. It is found in the chloroplast. This is an uncharacterized protein from Pyropia yezoensis (Susabi-nori).